Consider the following 429-residue polypeptide: Glutamate-1-semialdehyde 2,1-aminomutase (429 aa).

The residue at position 267 (K267) is an N6-(pyridoxal phosphate)lysine.

This sequence belongs to the class-III pyridoxal-phosphate-dependent aminotransferase family. HemL subfamily. As to quaternary structure, homodimer. Requires pyridoxal 5'-phosphate as cofactor.

It localises to the cytoplasm. The enzyme catalyses (S)-4-amino-5-oxopentanoate = 5-aminolevulinate. It participates in porphyrin-containing compound metabolism; protoporphyrin-IX biosynthesis; 5-aminolevulinate from L-glutamyl-tRNA(Glu): step 2/2. This is Glutamate-1-semialdehyde 2,1-aminomutase from Xanthomonas oryzae pv. oryzae (strain MAFF 311018).